Consider the following 231-residue polypeptide: 5'-methylthioadenosine/S-adenosylhomocysteine nucleosidase (231 aa).

The active-site Proton acceptor is the Glu-12. Residues Gly-78, Met-153, and 174-175 (ME) each bind substrate. The Proton donor role is filled by Asp-198.

The protein belongs to the PNP/UDP phosphorylase family. MtnN subfamily.

The enzyme catalyses S-adenosyl-L-homocysteine + H2O = S-(5-deoxy-D-ribos-5-yl)-L-homocysteine + adenine. It carries out the reaction S-methyl-5'-thioadenosine + H2O = 5-(methylsulfanyl)-D-ribose + adenine. It catalyses the reaction 5'-deoxyadenosine + H2O = 5-deoxy-D-ribose + adenine. The protein operates within amino-acid biosynthesis; L-methionine biosynthesis via salvage pathway; S-methyl-5-thio-alpha-D-ribose 1-phosphate from S-methyl-5'-thioadenosine (hydrolase route): step 1/2. Functionally, catalyzes the irreversible cleavage of the glycosidic bond in both 5'-methylthioadenosine (MTA) and S-adenosylhomocysteine (SAH/AdoHcy) to adenine and the corresponding thioribose, 5'-methylthioribose and S-ribosylhomocysteine, respectively. Also cleaves 5'-deoxyadenosine, a toxic by-product of radical S-adenosylmethionine (SAM) enzymes, into 5-deoxyribose and adenine. The protein is 5'-methylthioadenosine/S-adenosylhomocysteine nucleosidase of Bacillus cereus (strain B4264).